We begin with the raw amino-acid sequence, 394 residues long: Elongation factor Tu (394 aa).

Residues 10-204 form the tr-type G domain; it reads KTHLNVGTIG…TLDTYIEDPV (195 aa). Residues 19–26 form a G1 region; it reads GHVDHGKT. 19–26 provides a ligand contact to GTP; that stretch reads GHVDHGKT. Thr26 lines the Mg(2+) pocket. The G2 stretch occupies residues 60–64; sequence GITIK. Residues 81–84 form a G3 region; the sequence is DCPG. Residues 81 to 85 and 136 to 139 each bind GTP; these read DCPGH and NKCD. The G4 stretch occupies residues 136–139; it reads NKCD. Residues 174 to 176 are G5; it reads SAL.

The protein belongs to the TRAFAC class translation factor GTPase superfamily. Classic translation factor GTPase family. EF-Tu/EF-1A subfamily. As to quaternary structure, monomer.

It is found in the cytoplasm. The catalysed reaction is GTP + H2O = GDP + phosphate + H(+). In terms of biological role, GTP hydrolase that promotes the GTP-dependent binding of aminoacyl-tRNA to the A-site of ribosomes during protein biosynthesis. The polypeptide is Elongation factor Tu (Aster yellows witches'-broom phytoplasma (strain AYWB)).